The following is a 701-amino-acid chain: DNA ligase (701 aa).

Positions Met1–Glu21 are disordered. NAD(+) contacts are provided by residues Asp50–Asp54, Ser100–Leu101, and Glu130. Lys132 acts as the N6-AMP-lysine intermediate in catalysis. NAD(+) contacts are provided by Arg153, Glu193, Lys309, and Lys333. Zn(2+) is bound by residues Cys427, Cys430, Cys446, and Cys452. The BRCT domain occupies Ser616–Gly701.

The protein belongs to the NAD-dependent DNA ligase family. LigA subfamily. Requires Mg(2+) as cofactor. The cofactor is Mn(2+).

The enzyme catalyses NAD(+) + (deoxyribonucleotide)n-3'-hydroxyl + 5'-phospho-(deoxyribonucleotide)m = (deoxyribonucleotide)n+m + AMP + beta-nicotinamide D-nucleotide.. DNA ligase that catalyzes the formation of phosphodiester linkages between 5'-phosphoryl and 3'-hydroxyl groups in double-stranded DNA using NAD as a coenzyme and as the energy source for the reaction. It is essential for DNA replication and repair of damaged DNA. The sequence is that of DNA ligase from Mycobacterium sp. (strain KMS).